We begin with the raw amino-acid sequence, 282 residues long: Large ribosomal subunit protein uL2 (282 aa).

A disordered region spans residues R215 to K282. The segment covering R263 to K282 has biased composition (basic residues).

It belongs to the universal ribosomal protein uL2 family. Part of the 50S ribosomal subunit. Forms a bridge to the 30S subunit in the 70S ribosome.

Functionally, one of the primary rRNA binding proteins. Required for association of the 30S and 50S subunits to form the 70S ribosome, for tRNA binding and peptide bond formation. It has been suggested to have peptidyltransferase activity; this is somewhat controversial. Makes several contacts with the 16S rRNA in the 70S ribosome. This is Large ribosomal subunit protein uL2 from Mesomycoplasma hyopneumoniae (strain 7448) (Mycoplasma hyopneumoniae).